Here is an 87-residue protein sequence, read N- to C-terminus: MAHKKAGGSSRNGRDSESKRLGVKVYGGQAINAGGIIVRQRGTRMHAGENVGMGKDHTLFALVDGHVKFTTKGAAKKHTVVVVPAAA.

The interval 1-21 (MAHKKAGGSSRNGRDSESKRL) is disordered.

The protein belongs to the bacterial ribosomal protein bL27 family.

The chain is Large ribosomal subunit protein bL27 from Burkholderia mallei (strain NCTC 10247).